Reading from the N-terminus, the 635-residue chain is MINISLSDGSVRQFEKGMTIYEVANAISMSLAKQAIVAEINGELKDLSTVIENNCKLRILTAKDPECLEIIRHDAAHLTAEAVKELFPETQVTIGPAIENGYYYDFARDKPFTVDDLAVIEAKMQELAKKNEKVTRELWNRDKAIEFFRSIGEHYKAEIIASIPTDEPITLYRQGNFIDLCRGPHAPSTGFVKYFKLMKVAGSYWRGDSRNQVLQRIYGTAWATKEQLDHYLFMLEEAEKRDHRKLGRELDLFHFQEEAQGMVFWHDKGWSIYNIVEQYIRKKIRKNGYTEVKTPVLVDKRLWEASGHWEKFRDNMFALEADNKILALKPMNCPCHVQIFKQGIKSYRDLPLRMSEFGLCHRNEASGALHGLMRVRSLVQDDAHIFCAEEQITDETVSFCKLLTEVYKDFGFTDIKVKFSDRPEIRAGSDEVWDKAENALKEAVEKAGFTYTLNPGEGAFYGPKLEFVLTDAIGRQWQCGTLQMDFVLLEQLDASYVAASGEKKRPVMLHRAILGSLERFIGILIEEYAGCFPLWLAPVQVAIATITSDLNDYALAVQKALIDNGVRTDINISPDKINYKIREFSNHKVPLIAIIGKKEKENKQVTIRRLGTTDQQVLSVKQLITLISEENSKYL.

Residues 1–61 form the TGS domain; that stretch reads MINISLSDGS…ENNCKLRILT (61 aa). The segment at 242–533 is catalytic; that stretch reads DHRKLGRELD…LIEEYAGCFP (292 aa). 3 residues coordinate Zn(2+): C333, H384, and H510.

It belongs to the class-II aminoacyl-tRNA synthetase family. In terms of assembly, homodimer. Requires Zn(2+) as cofactor.

It is found in the cytoplasm. It catalyses the reaction tRNA(Thr) + L-threonine + ATP = L-threonyl-tRNA(Thr) + AMP + diphosphate + H(+). Functionally, catalyzes the attachment of threonine to tRNA(Thr) in a two-step reaction: L-threonine is first activated by ATP to form Thr-AMP and then transferred to the acceptor end of tRNA(Thr). Also edits incorrectly charged L-seryl-tRNA(Thr). This is Threonine--tRNA ligase from Rickettsia canadensis (strain McKiel).